Consider the following 367-residue polypeptide: Peptide chain release factor 1 (367 aa).

Residue glutamine 243 is modified to N5-methylglutamine.

This sequence belongs to the prokaryotic/mitochondrial release factor family. Post-translationally, methylated by PrmC. Methylation increases the termination efficiency of RF1.

Its subcellular location is the cytoplasm. Functionally, peptide chain release factor 1 directs the termination of translation in response to the peptide chain termination codons UAG and UAA. The sequence is that of Peptide chain release factor 1 from Acidovorax ebreus (strain TPSY) (Diaphorobacter sp. (strain TPSY)).